The following is a 309-amino-acid chain: MVNGVLLLHKPVGMTSHDCVMKIRKLLKTKKVGHTGTLDPEVSGVLPICVGRATKIVEYLTEKSKTYDAEITLGFSTTTEDQTGETVETKPVNHDIDKADVEKVLNSLKGKQEQIPPMYSAVKVNGKKLYEYARAGIEVERPKRMITIEDIALTTEIKHHGETASFRFTVTCSKGTYVRTLAVMIGEKLGYPAHMSHLIRTASGDFSLDECFTFDELEAQAQSGTVEEHTVPIERALNHLPKWIISDTLAKKVENGALLETPEQFSEMTSGDRIAVFTESGTCLAIYFPHPAKKGLLKPAKVLMQKSEQ.

Catalysis depends on Asp-39, which acts as the Nucleophile.

The protein belongs to the pseudouridine synthase TruB family. Type 1 subfamily.

It carries out the reaction uridine(55) in tRNA = pseudouridine(55) in tRNA. In terms of biological role, responsible for synthesis of pseudouridine from uracil-55 in the psi GC loop of transfer RNAs. This Bacillus subtilis (strain 168) protein is tRNA pseudouridine synthase B.